A 631-amino-acid chain; its full sequence is Phosphomethylpyrimidine synthase (631 aa).

Residues asparagine 239, methionine 268, tyrosine 297, histidine 333, 353–355 (SRG), 394–397 (DGLR), and glutamate 433 contribute to the substrate site. Residue histidine 437 coordinates Zn(2+). Tyrosine 460 serves as a coordination point for substrate. Histidine 501 is a Zn(2+) binding site. The [4Fe-4S] cluster site is built by cysteine 581, cysteine 584, and cysteine 589.

This sequence belongs to the ThiC family. As to quaternary structure, homodimer. It depends on [4Fe-4S] cluster as a cofactor.

The catalysed reaction is 5-amino-1-(5-phospho-beta-D-ribosyl)imidazole + S-adenosyl-L-methionine = 4-amino-2-methyl-5-(phosphooxymethyl)pyrimidine + CO + 5'-deoxyadenosine + formate + L-methionine + 3 H(+). It functions in the pathway cofactor biosynthesis; thiamine diphosphate biosynthesis. In terms of biological role, catalyzes the synthesis of the hydroxymethylpyrimidine phosphate (HMP-P) moiety of thiamine from aminoimidazole ribotide (AIR) in a radical S-adenosyl-L-methionine (SAM)-dependent reaction. The polypeptide is Phosphomethylpyrimidine synthase (Escherichia fergusonii (strain ATCC 35469 / DSM 13698 / CCUG 18766 / IAM 14443 / JCM 21226 / LMG 7866 / NBRC 102419 / NCTC 12128 / CDC 0568-73)).